A 980-amino-acid polypeptide reads, in one-letter code: Ras and Rab interactor 3 (980 aa).

The disordered stretch occupies residues 1 to 40 (MRRAEAPSSAHPAGPIPDAGKGEGEEDEEKDGTRLGLSTT). The SH2 domain occupies 63–158 (WLQLGLGQAE…LLPFTLRLPQ (96 aa)). Over residues 247 to 260 (PLPTGSYPPRPTPA) the composition is skewed to pro residues. Disordered regions lie at residues 247 to 496 (PLPT…TGAS) and 509 to 560 (QHLQ…LEFS). Residues 261–271 (TPDATSPTSKG) show a composition bias toward low complexity. Residues 274–308 (RRPPPPPPLPTVPPTGPARPLAPPVPPAGPLPNSP) are compositionally biased toward pro residues. 2 stretches are compositionally biased toward polar residues: residues 406-422 (ISRT…TVSS) and 484-494 (QEASSEKQATG). The segment covering 514 to 523 (QSSSCPQSSP) has biased composition (low complexity). An interaction with RAB5B region spans residues 584 to 729 (FASVFHAFLS…TTTDLGVTTS (146 aa)). A VPS9 domain is found at 700–843 (HSRDGSLQQL…IKNYDKITVT (144 aa)). The Ras-associating domain occupies 865 to 962 (KARASRSSVQ…FHFVYRPQDS (98 aa)).

The protein belongs to the RIN (Ras interaction/interference) family. As to quaternary structure, interacts with CD2AP, RAB5B, RAB31 and BIN1.

It is found in the cytoplasm. Its subcellular location is the cytoplasmic vesicle. The protein localises to the early endosome. Its function is as follows. Ras effector protein that functions as a guanine nucleotide exchange (GEF) for RAB5B and RAB31, by exchanging bound GDP for free GTP. Required for normal RAB31 function. This is Ras and Rab interactor 3 (Rin3) from Mus musculus (Mouse).